A 119-amino-acid polypeptide reads, in one-letter code: Large ribosomal subunit protein bL20c (119 aa).

The protein belongs to the bacterial ribosomal protein bL20 family.

The protein resides in the plastid. Its subcellular location is the chloroplast. Its function is as follows. Binds directly to 23S ribosomal RNA and is necessary for the in vitro assembly process of the 50S ribosomal subunit. It is not involved in the protein synthesizing functions of that subunit. This is Large ribosomal subunit protein bL20c (rpl20) from Oryza sativa (Rice).